The sequence spans 205 residues: MFIFFYLFATLITISSLCVVLSKNSVYSVLWLIFAFINGAGLMILLGAEFLAMMLIVIYVGAVAVLFLFVIMMLDMHFNKTITQLKENLALSSFIALIMFADLVTIILLGTKNINFISDVSFTITNDISNTKAIGKVLYTDFMLPFQMAGLILFVAMIACITLTLKKREGVKHQDITKQLSHNKSNVVLMTKPTLNKGVENIKYE.

5 consecutive transmembrane segments (helical) span residues 1 to 21 (MFIF…CVVL), 26 to 46 (VYSV…MILL), 54 to 74 (MLIV…IMML), 89 to 109 (LALS…IILL), and 142 to 162 (FMLP…ACIT).

It belongs to the complex I subunit 6 family.

The protein localises to the cell membrane. The enzyme catalyses a quinone + NADH + 5 H(+)(in) = a quinol + NAD(+) + 4 H(+)(out). Functionally, NDH-1 shuttles electrons from NADH, via FMN and iron-sulfur (Fe-S) centers, to quinones in the respiratory chain. Couples the redox reaction to proton translocation (for every two electrons transferred, four hydrogen ions are translocated across the cytoplasmic membrane), and thus conserves the redox energy in a proton gradient. This chain is NADH-quinone oxidoreductase subunit J (nuoJ), found in Rickettsia felis (strain ATCC VR-1525 / URRWXCal2) (Rickettsia azadi).